The sequence spans 431 residues: WD repeat-containing protein 18 (431 aa).

WD repeat units follow at residues 78 to 118 (VCPG…AILS), 119 to 158 (RHFQDLSCIKFTDDSSHFVSGGKDNLAFIWNLSSVVQLDS), 170 to 211 (RHSL…MLLS), 213 to 252 (LFDVGIMSVTFDPCEYFLFCGGSDGNIFQVSLCSTSLSRD), and 267 to 306 (GHRNLVTCLSVSMDGTVLLSGSNDETVRMWDVQSKQCIWT). The tract at residues 342 to 363 (HLNPSEQGDGTGTGGMSLRLGA) is disordered.

This sequence belongs to the WD repeat IPI3/WDR18 family. As to quaternary structure, component of the PELP1 complex, composed of at least PELP1, TEX10 and WDR18. The complex interacts with pre-60S ribosome particles.

It is found in the nucleus. Its subcellular location is the nucleolus. It localises to the nucleoplasm. The protein resides in the dynein axonemal particle. Functionally, involved in left-right determination through controlling the correct clustering and migration of dorsal forerunner cells (DFCs) and Kupffer's vesicle formation. Component of the PELP1 complex involved in the nucleolar steps of 28S rRNA maturation and the subsequent nucleoplasmic transit of the pre-60S ribosomal subunit. This chain is WD repeat-containing protein 18 (wdr18), found in Danio rerio (Zebrafish).